The following is a 287-amino-acid chain: MTYTTRQIGAKNTLDYKLFIEKDGKPVSPFHDIPLYADEDKQIFNMVVEIPRWTNAKLEITKEENLNPIIQDTKKGKLRYVRNCFPHHGYIHNYGAFPQTWEDPNVVHPETKAVGDNDPVDVLEIGETIGYTGQVKQVKVLGIMALLDEGETDWKVIAIDVNDPLAPKLHDIEDVEKYFPGQLRATNEWFRIYKIPDGKPENQFAFSGEAKNKKYALDIIRETHESWKQLIHGQVSDSKGISLTNTTLTDTPTYSAAAASEVPSASPQPDAPVDKSVDKWFFISGSA.

Arg-79 is a binding site for diphosphate. 3 residues coordinate Mg(2+): Asp-116, Asp-121, and Asp-153.

Belongs to the PPase family. Mg(2+) is required as a cofactor.

The protein resides in the cytoplasm. It carries out the reaction diphosphate + H2O = 2 phosphate + H(+). This chain is Inorganic pyrophosphatase (IPP1), found in Zygosaccharomyces bailii.